Consider the following 207-residue polypeptide: 3-demethoxyubiquinol 3-hydroxylase (207 aa).

Fe cation-binding residues include glutamate 56, glutamate 86, histidine 89, glutamate 138, glutamate 170, and histidine 173.

It belongs to the COQ7 family. It depends on Fe cation as a cofactor.

It is found in the cell membrane. The enzyme catalyses a 5-methoxy-2-methyl-3-(all-trans-polyprenyl)benzene-1,4-diol + AH2 + O2 = a 3-demethylubiquinol + A + H2O. Its pathway is cofactor biosynthesis; ubiquinone biosynthesis. Its function is as follows. Catalyzes the hydroxylation of 2-nonaprenyl-3-methyl-6-methoxy-1,4-benzoquinol during ubiquinone biosynthesis. This is 3-demethoxyubiquinol 3-hydroxylase from Dechloromonas aromatica (strain RCB).